Here is a 183-residue protein sequence, read N- to C-terminus: NADH-quinone oxidoreductase subunit A (183 aa).

3 helical membrane passes run 11–31 (IIAFVIGVTFLCVFMLTVPLL), 63–83 (FYLVAIFFVVFDLEALYLYAW), and 98–118 (VVIFVVDLLIALVYAFSVGAL). The disordered stretch occupies residues 159-183 (TGQIPAQSSGRVKSKTTPALSSEKE).

This sequence belongs to the complex I subunit 3 family. In terms of assembly, NDH-1 is composed of 14 different subunits. Subunits NuoA, H, J, K, L, M, N constitute the membrane sector of the complex.

The protein resides in the cell inner membrane. The catalysed reaction is a quinone + NADH + 5 H(+)(in) = a quinol + NAD(+) + 4 H(+)(out). Its function is as follows. NDH-1 shuttles electrons from NADH, via FMN and iron-sulfur (Fe-S) centers, to quinones in the respiratory chain. The immediate electron acceptor for the enzyme in this species is believed to be ubiquinone. Couples the redox reaction to proton translocation (for every two electrons transferred, four hydrogen ions are translocated across the cytoplasmic membrane), and thus conserves the redox energy in a proton gradient. In Acinetobacter baumannii (strain AYE), this protein is NADH-quinone oxidoreductase subunit A.